The following is a 73-amino-acid chain: Protein SlyX homolog (73 aa).

This sequence belongs to the SlyX family.

This is Protein SlyX homolog from Haemophilus ducreyi (strain 35000HP / ATCC 700724).